The primary structure comprises 827 residues: Protein SEY1 (827 aa).

The interval 1-26 (MSQSSPSNAETDEDLSTTSSSSSFVP) is disordered. The Cytoplasmic segment spans residues 1 to 719 (MSQSSPSNAE…KRSIVQHVTQ (719 aa)). The region spanning 63–291 (GNNYHIISVF…VKKDLFRPNY (229 aa)) is the GB1/RHD3-type G domain. 73-80 (GSQSTGKS) contributes to the GTP binding site. Coiled coils occupy residues 389–409 (KSVY…KFRE) and 472–492 (VSNL…VELK). The chain crosses the membrane as a helical span at residues 720 to 740 (IPYYIYLVIMVLGWNEFMAIV). The Lumenal portion of the chain corresponds to 741–743 (RNP). The helical transmembrane segment at 744–764 (LFFSLVLVFGAGLYILYSMNL) threads the bilayer. Over 765 to 827 (LKPAMVVVQR…VVETIEMQDL (63 aa)) the chain is Cytoplasmic. A coiled-coil region spans residues 803–823 (QKISASNREKVEEEKVVETIE).

The protein belongs to the TRAFAC class dynamin-like GTPase superfamily. GB1/RHD3 GTPase family. RHD3 subfamily.

Its subcellular location is the endoplasmic reticulum membrane. Functionally, cooperates with the reticulon proteins and tubule-shaping DP1 family proteins to generate and maintain the structure of the tubular endoplasmic reticulum network. Has GTPase activity, which is required for its function in ER organization. The chain is Protein SEY1 from Scheffersomyces stipitis (strain ATCC 58785 / CBS 6054 / NBRC 10063 / NRRL Y-11545) (Yeast).